Reading from the N-terminus, the 161-residue chain is RNA pyrophosphohydrolase (161 aa).

The Nudix hydrolase domain maps to 7–149 (KYRPCVGIML…KKEVYKTVIE (143 aa)). Residues 40–61 (GGIDDGEKLEQAALRELLEEVG) carry the Nudix box motif.

The protein belongs to the Nudix hydrolase family. RppH subfamily. A divalent metal cation serves as cofactor.

Its function is as follows. Accelerates the degradation of transcripts by removing pyrophosphate from the 5'-end of triphosphorylated RNA, leading to a more labile monophosphorylated state that can stimulate subsequent ribonuclease cleavage. In Wolbachia sp. subsp. Brugia malayi (strain TRS), this protein is RNA pyrophosphohydrolase.